The primary structure comprises 546 residues: Nuclear rim protein 1 (546 aa).

Composition is skewed to basic and acidic residues over residues 1-10 (MAFWRNRHES) and 25-35 (QNSEDIREDNN). The disordered stretch occupies residues 1-35 (MAFWRNRHESPAISQERSPSPDRFQNSEDIREDNN). Helical transmembrane passes span 155 to 175 (FYLLTVLLLITNISVTYRYLF) and 249 to 269 (FLTSFFVSFSPIAFCFLWMTD). Disordered stretches follow at residues 405-441 (YPSRQHSPRLSPSRYSHLQSGNTPSAPSTPLLIPSQQ) and 505-546 (RQGY…SPFR). Residues 406–441 (PSRQHSPRLSPSRYSHLQSGNTPSAPSTPLLIPSQQ) are compositionally biased toward polar residues. Residues 533 to 546 (SKSPFRNSSSSPFR) show a composition bias toward low complexity.

It belongs to the NUR1 family.

It localises to the nucleus membrane. Its function is as follows. Member of a perinuclear network that controls recombination at multiple loci to maintain genome stability. Required for rDNA repeat stability. The protein is Nuclear rim protein 1 (NUR1) of Kluyveromyces lactis (strain ATCC 8585 / CBS 2359 / DSM 70799 / NBRC 1267 / NRRL Y-1140 / WM37) (Yeast).